A 90-amino-acid polypeptide reads, in one-letter code: MAHKKGTGSTRNGRDSNSKRLGVKAYGGEKVTAGSILIRQRGTSVLPGINVGRGKDDTLFALTDGSVHFESIRRGLRNRKRINISTAKAV.

Residues 1 to 24 form a disordered region; sequence MAHKKGTGSTRNGRDSNSKRLGVK.

Belongs to the bacterial ribosomal protein bL27 family.

This Prochlorococcus marinus (strain NATL1A) protein is Large ribosomal subunit protein bL27.